The following is a 337-amino-acid chain: GTP 3',8-cyclase (337 aa).

The 226-residue stretch at 17–242 (AFQRRYYYLR…QSKGLLDGPA (226 aa)) folds into the Radical SAM core domain. A GTP-binding site is contributed by arginine 26. Positions 33 and 37 each coordinate [4Fe-4S] cluster. An S-adenosyl-L-methionine-binding site is contributed by tyrosine 39. Position 40 (cysteine 40) interacts with [4Fe-4S] cluster. A GTP-binding site is contributed by arginine 76. Glycine 80 lines the S-adenosyl-L-methionine pocket. A GTP-binding site is contributed by threonine 107. Serine 131 is a binding site for S-adenosyl-L-methionine. Lysine 168 serves as a coordination point for GTP. Position 202 (methionine 202) interacts with S-adenosyl-L-methionine. [4Fe-4S] cluster-binding residues include cysteine 265 and cysteine 268. A GTP-binding site is contributed by 270–272 (RLR). Cysteine 282 serves as a coordination point for [4Fe-4S] cluster.

This sequence belongs to the radical SAM superfamily. MoaA family. Monomer and homodimer. Requires [4Fe-4S] cluster as cofactor.

The enzyme catalyses GTP + AH2 + S-adenosyl-L-methionine = (8S)-3',8-cyclo-7,8-dihydroguanosine 5'-triphosphate + 5'-deoxyadenosine + L-methionine + A + H(+). It functions in the pathway cofactor biosynthesis; molybdopterin biosynthesis. Its function is as follows. Catalyzes the cyclization of GTP to (8S)-3',8-cyclo-7,8-dihydroguanosine 5'-triphosphate. This is GTP 3',8-cyclase from Pasteurella multocida (strain Pm70).